Reading from the N-terminus, the 387-residue chain is G2/mitotic-specific cyclin-B2 (387 aa).

The protein belongs to the cyclin family. Cyclin AB subfamily. Interacts with the CDK1 protein kinase to form a serine/threonine kinase holoenzyme complex also known as maturation promoting factor (MPF). The cyclin subunit imparts substrate specificity to the complex.

Its function is as follows. Essential for the control of the cell cycle at the G2/M (mitosis) transition. The chain is G2/mitotic-specific cyclin-B2 (ccnb2) from Oryzias latipes (Japanese rice fish).